The primary structure comprises 420 residues: Riboflavin biosynthesis protein RibBA (420 aa).

The segment at 1-202 is DHBP synthase; the sequence is MTTFGTIEQA…IADLVAYRRR (202 aa). D-ribulose 5-phosphate is bound by residues 28 to 29, aspartate 33, 141 to 145, and glutamate 165; these read RE and RPGHT. Glutamate 29 is a binding site for Mg(2+). Histidine 144 contributes to the Mg(2+) binding site. Residues 203–420 are GTP cyclohydrolase II; sequence TEKQVELVAE…RAVVGDGIGA (218 aa). 253 to 257 lines the GTP pocket; sequence RVHSE. The Zn(2+) site is built by cysteine 258, cysteine 269, and cysteine 271. Residues glutamine 274, 297 to 299, and threonine 319 each bind GTP; that span reads EGR. The active-site Proton acceptor; for GTP cyclohydrolase activity is aspartate 331. The active-site Nucleophile; for GTP cyclohydrolase activity is the arginine 333. GTP is bound by residues threonine 354 and lysine 359.

This sequence in the N-terminal section; belongs to the DHBP synthase family. The protein in the C-terminal section; belongs to the GTP cyclohydrolase II family. Requires Mg(2+) as cofactor. Mn(2+) is required as a cofactor. Zn(2+) serves as cofactor.

The catalysed reaction is D-ribulose 5-phosphate = (2S)-2-hydroxy-3-oxobutyl phosphate + formate + H(+). It carries out the reaction GTP + 4 H2O = 2,5-diamino-6-hydroxy-4-(5-phosphoribosylamino)-pyrimidine + formate + 2 phosphate + 3 H(+). The protein operates within cofactor biosynthesis; riboflavin biosynthesis; 2-hydroxy-3-oxobutyl phosphate from D-ribulose 5-phosphate: step 1/1. It participates in cofactor biosynthesis; riboflavin biosynthesis; 5-amino-6-(D-ribitylamino)uracil from GTP: step 1/4. Its function is as follows. Catalyzes the conversion of D-ribulose 5-phosphate to formate and 3,4-dihydroxy-2-butanone 4-phosphate. In terms of biological role, catalyzes the conversion of GTP to 2,5-diamino-6-ribosylamino-4(3H)-pyrimidinone 5'-phosphate (DARP), formate and pyrophosphate. This Salinispora arenicola (strain CNS-205) protein is Riboflavin biosynthesis protein RibBA.